The primary structure comprises 790 residues: Eukaryotic translation initiation factor 3 subunit C (790 aa).

A disordered region spans residues 1–62; sequence MSRFFVSGYN…DGRPSGPAYF (62 aa). Residues 14–53 show a composition bias toward acidic residues; that stretch reads SSEEEDLLSSEEELLTSSGEENEDSDFFNDDDESSSDEED. The PCI domain maps to 556-728; sequence FHQHINLELL…IVFTTDSQRS (173 aa). Residues 748–790 are disordered; sequence NEKTSSNGYAKKNQSQTQPQAQSKEVEENKFRYANVNTNTDEF. The span at 751–770 shows a compositional bias: polar residues; the sequence is TSSNGYAKKNQSQTQPQAQS.

It belongs to the eIF-3 subunit C family. As to quaternary structure, component of the eukaryotic translation initiation factor 3 (eIF-3) complex.

It localises to the cytoplasm. Its function is as follows. Component of the eukaryotic translation initiation factor 3 (eIF-3) complex, which is involved in protein synthesis of a specialized repertoire of mRNAs and, together with other initiation factors, stimulates binding of mRNA and methionyl-tRNAi to the 40S ribosome. The eIF-3 complex specifically targets and initiates translation of a subset of mRNAs involved in cell proliferation. The sequence is that of Eukaryotic translation initiation factor 3 subunit C from Lodderomyces elongisporus (strain ATCC 11503 / CBS 2605 / JCM 1781 / NBRC 1676 / NRRL YB-4239) (Yeast).